A 457-amino-acid polypeptide reads, in one-letter code: UDP-glycosyltransferase 72C1 (457 aa).

UDP-alpha-D-glucose-binding positions include S272, 343 to 344, 361 to 369, and 383 to 386; these read WA, HCGWNSVLE, and YSEQ.

The protein belongs to the UDP-glycosyltransferase family.

The protein is UDP-glycosyltransferase 72C1 (UGT72C1) of Arabidopsis thaliana (Mouse-ear cress).